The primary structure comprises 660 residues: Solute carrier family 5 member 4 (660 aa).

The Cytoplasmic segment spans residues 1-28; the sequence is MASTLSPSTVTKTPGPPEISERIQNAAD. The chain crosses the membrane as a helical span at residues 29–47; the sequence is ISVIVIYFVVVMAVGLWAM. Topologically, residues 48–64 are extracellular; sequence LRTNRGTVGGFFLAGRD. Residues 65–85 form a helical membrane-spanning segment; sequence VTWWPMGASLFASNIGSGHFV. The Cytoplasmic segment spans residues 86–105; the sequence is GLAGTGAASGIAIAAFEWNA. Residues 106–126 form a helical membrane-spanning segment; sequence LLLLLVLGWFFVPIYIKAGVM. Residues 127–171 lie on the Extracellular side of the membrane; the sequence is TMPEYLRKRFGGKRLQIYLSILSLFICVALRISSDIFSGAIFIKL. Residues 172–191 form a helical membrane-spanning segment; that stretch reads ALGLDLYLAIFSLLAITAIY. Topologically, residues 192–208 are cytoplasmic; sequence TITGGLASVIYTDTLQT. A helical membrane pass occupies residues 209-229; the sequence is IIMLIGSFILMGFAFVEVGGY. The Extracellular segment spans residues 230–270; sequence ESFTEKYMNAIPTIVEGDNLTISPKCYTPQGDSFHIFRDAV. Residue Asn248 is glycosylated (N-linked (GlcNAc...) asparagine). The helical transmembrane segment at 271 to 291 threads the bilayer; the sequence is TGDIPWPGMIFGMTVVAAWYW. At 292–314 the chain is on the cytoplasmic side; that stretch reads CTDQVIVQRCLSGKDMSHVKAAC. A helical transmembrane segment spans residues 315-334; the sequence is IMCGYLKLLPMFLMVMPGMI. Residues 335-423 are Extracellular-facing; it reads SRILYTEKVA…RKQASEKELL (89 aa). A helical transmembrane segment spans residues 424-443; it reads IAGRLFIILLIVISIVWVPL. At 444 to 455 the chain is on the cytoplasmic side; that stretch reads VQVAQNGQLFHY. A helical membrane pass occupies residues 456–476; it reads IESISSYLGPPIAAVFLLAIF. At 477–526 the chain is on the extracellular side; sequence CKRVNEQGAFWGLIIGFVMGLIRMIAEFVYGTGSCLAASNCPQIICGVHY. Residues 527 to 547 form a helical membrane-spanning segment; that stretch reads LYFALILFFVSILVVLAISLL. Topologically, residues 548-638 are cytoplasmic; sequence TKPIPDVHLY…TDTSEKPLWK (91 aa). A helical transmembrane segment spans residues 639–659; that stretch reads TIVNINAILLLAVAVFVHGYF.

Belongs to the sodium:solute symporter (SSF) (TC 2.A.21) family. Kidney, intestine, liver, skeletal muscle and spleen.

The protein resides in the cell membrane. The enzyme catalyses D-glucose(out) + 2 Na(+)(out) = D-glucose(in) + 2 Na(+)(in). Inhibited by phlorizin. Low-affinity sodium/D-glucose symporter with a great selectivity for sugars (D-glucose &gt;&gt; D-galactose). Na(+) and D-glucose transport are tightly coupled at neutral pH, but at acidic pH, ion transport is uncoupled from sugar transport. This chain is Solute carrier family 5 member 4, found in Sus scrofa (Pig).